The sequence spans 930 residues: F-box only protein 11 (930 aa).

Residues 1–150 (MNSVRAANRR…RVSGKSQDLS (150 aa)) form a disordered region. The span at 7–16 (ANRRPRRVSR) shows a compositional bias: basic residues. Positions 17-27 (PRPVQQQQQQP) are enriched in low complexity. Positions 28–73 (PQQPPPQPPQQQPPPQPPQQPPQQQPPPPPQQQPPPPPPPPPPPPQ) are enriched in pro residues. Over residues 117 to 132 (PTKSSMEGASTSTTEN) the composition is skewed to polar residues. Residues 156-202 (QYLQEKLPDEVVLKIFSYLLEQDLCRAACVCKRFSELANDPILWKRL) enclose the F-box domain. 19 PbH1 repeats span residues 398–420 (GACPTIKHCNISDCENVGLYITD), 421–443 (HAQGIYEDNEISNNALAGIWVKN), 444–466 (HGNPIIRRNHIHHGRDVGVFTFD), 467–489 (HGMGYFESCNIHRNRIAGFEVKA), 490–512 (YANPTVVRCEIHHGQTGGIYVHE), 513–535 (KGRGQFIENKIYANNFAGVWITS), 536–558 (NSDPTIRGNSIFNGNQGGVYIFG), 559–581 (DGRGLIEGNDIYGNALAGIQIRT), 582–604 (NSCPIVRHNKIHDGQHGGIYVHE), 605–627 (KGQGVIEENEVYSNTLAGVWVTT), 628–650 (GSTPVLRRNRIHSGKQVGVYFYD), 651–673 (NGHGVLEDNDIYNHMYSGVQIRT), 674–696 (GSNPKIRRNKIWGGQNGGILVYN), 697–719 (SGLGCIEDNEIFDNAMAGVWIKT), 720–742 (DSNPTLRRNKIHDGRDGGICIFN), 743–765 (GGRGLLEENDIFRNAQAGVLIST), 766–788 (NSHPVLRKNRIFDGFAAGIEITN), 789–811 (HATATLEGNQIFNNRFGGLFLAS), and 812–833 (GVNVTMKDNKIMNNQDAIEKAV). The UBR-type zinc-finger motif lies at 836-907 (GQCLYKISSY…LSNPCTLAGE (72 aa)).

Component of the SCF(FBXO11) complex consisting of CUL1, RBX1, SKP1 and FBXO11. Interacts with CIITA. At 9.5 dpc and 10.5 dpc, expression is restricted to developing heart tissue. By 11.5 dpc and 12.5 dpc, detected in liver and subsequently in muscle by 13.5 dpc. At 14.5 dpc, still detected in heart, liver and muscle and also in the developing secondary palate including the nasal, medial and oral epithelia of the palatal shelves. At 15.5 dpc and 16.5 dpc, expressed in lung, kidney, heart, liver, muscle and adrenal gland. At this time, fusion of the palate shelves has occurred, with expression confined to the nasal and oral epithelia. At 17.5 dpc, expression in the lung is confined to bronchial epithelial cells and is evident in bone marrow, skin, tissue macrophages, osteoblasts, kidney, liver and spleen. At 18.5 dpc, expressed in bone marrow, liver, kidney and muscle but decreases in heart and lung. At this time, first detected in the middle ear epithelium. At the newborn stage, expression is strong in the middle ear where it is confined to mucin-secreting cells, as well as persisting in bone marrow, kidney and liver. Middle ear expression persists in postnatal head tissue at 4 and 13 days after birth and has declined by 21 days after birth. In the adult, expression is seen in alveolar macrophages of the lung, glomeruli and collecting tubules of the kidney, midbrain, heart and muscle.

The protein resides in the nucleus. It is found in the chromosome. It functions in the pathway protein modification; protein ubiquitination. In terms of biological role, substrate recognition component of a SCF (SKP1-CUL1-F-box protein) E3 ubiquitin-protein ligase complex which mediates the ubiquitination and subsequent proteasomal degradation of target proteins, such as DTL/CDT2, BCL6, SNAI1 and PRDM1/BLIMP1. The SCF(FBXO11) complex mediates ubiquitination and degradation of BCL6, thereby playing a role in the germinal center B-cells terminal differentiation toward memory B-cells and plasma cells. The SCF(FBXO11) complex also mediates ubiquitination and degradation of DTL, an important step for the regulation of TGF-beta signaling, cell migration and the timing of the cell-cycle progression and exit. The SCF(FBXO11) complex also catalyzes ubiquitination and degradation of GSK3B-phosphorylated SNAI1. Binds to and neddylates phosphorylated p53/TP53, inhibiting its transcriptional activity. Plays a role in the regulatiom of erythropoiesis but not myelopoiesis or megakaryopoiesis. Mechanistically, activates erythroid genes by mediating the degradation of BAHD1, a heterochromatin-associated protein that recruits corepressors to H3K27me3 marks. Participates in macrophage cell death and inflammation in response to bacterial toxins by regulating the expression of complement 5a receptor 1/C5AR1 and IL-1beta. Acts as a critical regulator to determine the level of MHC-II by mediating the recognition of degron at the P/S/T domain of CIITA leading to its ubiquitination and subsequent degradation via the proteasome. Participates in the antiviral repsonse by initiating the activation of TBK1-IRF3-IFN-I axis. Mediates the 'Lys-63'-linked ubiquitination of TRAF3 to strengthen the interaction between TRAF3 and TBK1. This Mus musculus (Mouse) protein is F-box only protein 11.